A 383-amino-acid polypeptide reads, in one-letter code: Trichodiene synthase (383 aa).

It belongs to the trichodiene synthase family.

It carries out the reaction (2E,6E)-farnesyl diphosphate = trichodiene + diphosphate. It functions in the pathway sesquiterpene biosynthesis; trichothecene biosynthesis. Functionally, TS is a member of the terpene cyclase group of enzymes. It catalyzes the isomerization and cyclization of farnesyl pyro-phosphate to form trichodiene, the first cyclic intermediate in the biosynthetic pathway for trichothecenes. It serves to branch trichothecene biosynthesis from the isoprenoid pathway. The sequence is that of Trichodiene synthase (TRI5) from Gibberella pulicaris.